The primary structure comprises 475 residues: Squamosa promoter-binding-like protein 12 (475 aa).

The interval 49–73 is disordered; the sequence is NHGSTNSSGGTFTSSSELANGSSKS. Residues 51–73 show a composition bias toward low complexity; it reads GSTNSSGGTFTSSSELANGSSKS. The segment at 177-254 adopts an SBP-type zinc-finger fold; sequence SSYCQVEGCK…SDHNARRRKP (78 aa). Zn(2+) contacts are provided by Cys-180, Cys-185, Cys-202, His-205, Cys-221, Cys-224, His-228, and Cys-240. The Bipartite nuclear localization signal motif lies at 237–253; sequence KKSCRRRLSDHNARRRK. Residues 437–475 form a disordered region; sequence GGGGFWQDGDDPPPLDHASQAQAFMHPGNGSSSGYGHLH. Over residues 465–475 the composition is skewed to polar residues; the sequence is NGSSSGYGHLH.

As to expression, expressed in young panicles.

It localises to the nucleus. Trans-acting factor that binds specifically to the consensus nucleotide sequence 5'-TNCGTACAA-3'. May be involved in panicle development. The chain is Squamosa promoter-binding-like protein 12 (SPL12) from Oryza sativa subsp. indica (Rice).